A 93-amino-acid polypeptide reads, in one-letter code: MFWTSVARARSVWKGPNVVDFGVNVQQCIKGNVPIKTAVRSATILPRMVGAQFMVHNGKSYANVKITEDMIGHKLGEFAPTRKAFHYRQTKNR.

This sequence belongs to the universal ribosomal protein uS19 family. In terms of assembly, component of the mitochondrial small ribosomal subunit (mt-SSU). Mature yeast 74S mitochondrial ribosomes consist of a small (37S) and a large (54S) subunit. The 37S small subunit contains a 15S ribosomal RNA (15S mt-rRNA) and at least 32 different proteins. The 54S large subunit contains a 21S rRNA (21S mt-rRNA) and at least 45 different proteins.

The protein resides in the mitochondrion. Functionally, component of the mitochondrial ribosome (mitoribosome), a dedicated translation machinery responsible for the synthesis of mitochondrial genome-encoded proteins, including at least some of the essential transmembrane subunits of the mitochondrial respiratory chain. The mitoribosomes are attached to the mitochondrial inner membrane and translation products are cotranslationally integrated into the membrane. This Schizosaccharomyces pombe (strain 972 / ATCC 24843) (Fission yeast) protein is Small ribosomal subunit protein uS19m (rsm19).